The sequence spans 271 residues: MAGISSDSRAKVLAELESVLPTATAQLARELFSVLAVVDSSAGLRRALTDPSREGKDKAALLSSLVRGKVSAQAEQIVDSLAKERWASARDLGDALETVAATVAIAVAENEAPGAEGLEKLENDLFVFNQTVAANHQVQRALSEPQASAEAKQKLASALVPGASQVAELLIGQAVAAPRGARPAKLVEQFATLAAARQQRWIATVTVGQALNKNQEARLSAGLNNLYGRDLKVNISVDPTLIGGVRVRVGDEVVDASVVNRLGELRRQLAG.

The protein belongs to the ATPase delta chain family. In terms of assembly, F-type ATPases have 2 components, F(1) - the catalytic core - and F(0) - the membrane proton channel. F(1) has five subunits: alpha(3), beta(3), gamma(1), delta(1), epsilon(1). F(0) has three main subunits: a(1), b(2) and c(10-14). The alpha and beta chains form an alternating ring which encloses part of the gamma chain. F(1) is attached to F(0) by a central stalk formed by the gamma and epsilon chains, while a peripheral stalk is formed by the delta and b chains.

It localises to the cell membrane. Functionally, f(1)F(0) ATP synthase produces ATP from ADP in the presence of a proton or sodium gradient. F-type ATPases consist of two structural domains, F(1) containing the extramembraneous catalytic core and F(0) containing the membrane proton channel, linked together by a central stalk and a peripheral stalk. During catalysis, ATP synthesis in the catalytic domain of F(1) is coupled via a rotary mechanism of the central stalk subunits to proton translocation. This protein is part of the stalk that links CF(0) to CF(1). It either transmits conformational changes from CF(0) to CF(1) or is implicated in proton conduction. In Renibacterium salmoninarum (strain ATCC 33209 / DSM 20767 / JCM 11484 / NBRC 15589 / NCIMB 2235), this protein is ATP synthase subunit delta.